Here is a 93-residue protein sequence, read N- to C-terminus: UPF0298 protein LMHCC_0506 (93 aa).

Belongs to the UPF0298 family.

Its subcellular location is the cytoplasm. The protein is UPF0298 protein LMHCC_0506 of Listeria monocytogenes serotype 4a (strain HCC23).